Consider the following 79-residue polypeptide: Small ribosomal subunit protein bS18 (79 aa).

It belongs to the bacterial ribosomal protein bS18 family. As to quaternary structure, part of the 30S ribosomal subunit. Forms a tight heterodimer with protein bS6.

Functionally, binds as a heterodimer with protein bS6 to the central domain of the 16S rRNA, where it helps stabilize the platform of the 30S subunit. The sequence is that of Small ribosomal subunit protein bS18 from Streptococcus pyogenes serotype M5 (strain Manfredo).